Here is a 455-residue protein sequence, read N- to C-terminus: Bifunctional protein GlmU (455 aa).

Residues 1 to 226 (MGLSVVILAA…EFEILGVNDR (226 aa)) form a pyrophosphorylase region. UDP-N-acetyl-alpha-D-glucosamine-binding positions include 8–11 (LAAG), Lys22, Gln73, 78–79 (GT), 99–101 (YGD), Gly136, Glu151, Asn166, and Asn224. Position 101 (Asp101) interacts with Mg(2+). Asn224 lines the Mg(2+) pocket. Positions 227–247 (TQLASLERVWQRNVAEKIMAK) are linker. The interval 248 to 455 (GVSIADPNRF…WQRPVKKTDK (208 aa)) is N-acetyltransferase. UDP-N-acetyl-alpha-D-glucosamine contacts are provided by Arg330 and Lys348. His360 serves as the catalytic Proton acceptor. Tyr363 and Asn374 together coordinate UDP-N-acetyl-alpha-D-glucosamine. Residues Ala377, 383 to 384 (NY), Ser402, Ala420, and Arg437 each bind acetyl-CoA.

The protein in the N-terminal section; belongs to the N-acetylglucosamine-1-phosphate uridyltransferase family. This sequence in the C-terminal section; belongs to the transferase hexapeptide repeat family. Homotrimer. Mg(2+) is required as a cofactor.

The protein localises to the cytoplasm. It catalyses the reaction alpha-D-glucosamine 1-phosphate + acetyl-CoA = N-acetyl-alpha-D-glucosamine 1-phosphate + CoA + H(+). The enzyme catalyses N-acetyl-alpha-D-glucosamine 1-phosphate + UTP + H(+) = UDP-N-acetyl-alpha-D-glucosamine + diphosphate. The protein operates within nucleotide-sugar biosynthesis; UDP-N-acetyl-alpha-D-glucosamine biosynthesis; N-acetyl-alpha-D-glucosamine 1-phosphate from alpha-D-glucosamine 6-phosphate (route II): step 2/2. Its pathway is nucleotide-sugar biosynthesis; UDP-N-acetyl-alpha-D-glucosamine biosynthesis; UDP-N-acetyl-alpha-D-glucosamine from N-acetyl-alpha-D-glucosamine 1-phosphate: step 1/1. It functions in the pathway bacterial outer membrane biogenesis; LPS lipid A biosynthesis. Its function is as follows. Catalyzes the last two sequential reactions in the de novo biosynthetic pathway for UDP-N-acetylglucosamine (UDP-GlcNAc). The C-terminal domain catalyzes the transfer of acetyl group from acetyl coenzyme A to glucosamine-1-phosphate (GlcN-1-P) to produce N-acetylglucosamine-1-phosphate (GlcNAc-1-P), which is converted into UDP-GlcNAc by the transfer of uridine 5-monophosphate (from uridine 5-triphosphate), a reaction catalyzed by the N-terminal domain. This is Bifunctional protein GlmU from Francisella tularensis subsp. novicida (strain U112).